Reading from the N-terminus, the 97-residue chain is uncharacterized protein (97 aa).

Ser2 carries the N-acetylserine modification.

This is an uncharacterized protein from Mycobacterium tuberculosis (strain ATCC 25618 / H37Rv).